A 317-amino-acid chain; its full sequence is MQILLANPRGFCAGVDRAISIVERAIEMYGAPIYVRHEVVHNRYVVESLCERGAIFIEEISEVPDGSILIFSAHGVSQAVRAEARSRNLTMLFDATCPLVTKVHMEVARASRKGKEAILIGHAGHPEVEGTMGQYSNPNGGMYLVESPDDVWQLNVKDENNLCFMTQTTLSVDDTSAVIDALNTRFPKIVGPRKDDICYATTNRQEAVRNLANDADIVLVVGSKNSSNSNRLAELVQRMGKPAYLIDSAADIQEFWLQGAQCIGVTAGASAPDILVQQVIARLKDLGAGESIELSGREENIVFEVPKELRVEVKQID.

Cysteine 12 provides a ligand contact to [4Fe-4S] cluster. 2 residues coordinate (2E)-4-hydroxy-3-methylbut-2-enyl diphosphate: histidine 41 and histidine 74. Dimethylallyl diphosphate-binding residues include histidine 41 and histidine 74. 2 residues coordinate isopentenyl diphosphate: histidine 41 and histidine 74. [4Fe-4S] cluster is bound at residue cysteine 97. Histidine 125 is a (2E)-4-hydroxy-3-methylbut-2-enyl diphosphate binding site. A dimethylallyl diphosphate-binding site is contributed by histidine 125. Position 125 (histidine 125) interacts with isopentenyl diphosphate. The Proton donor role is filled by glutamate 127. (2E)-4-hydroxy-3-methylbut-2-enyl diphosphate is bound at residue threonine 168. Cysteine 198 provides a ligand contact to [4Fe-4S] cluster. (2E)-4-hydroxy-3-methylbut-2-enyl diphosphate contacts are provided by serine 226, serine 227, asparagine 228, and serine 270. Positions 226, 227, 228, and 270 each coordinate dimethylallyl diphosphate. Serine 226, serine 227, asparagine 228, and serine 270 together coordinate isopentenyl diphosphate.

This sequence belongs to the IspH family. As to quaternary structure, homodimer. The cofactor is [4Fe-4S] cluster.

The catalysed reaction is isopentenyl diphosphate + 2 oxidized [2Fe-2S]-[ferredoxin] + H2O = (2E)-4-hydroxy-3-methylbut-2-enyl diphosphate + 2 reduced [2Fe-2S]-[ferredoxin] + 2 H(+). It carries out the reaction dimethylallyl diphosphate + 2 oxidized [2Fe-2S]-[ferredoxin] + H2O = (2E)-4-hydroxy-3-methylbut-2-enyl diphosphate + 2 reduced [2Fe-2S]-[ferredoxin] + 2 H(+). It functions in the pathway isoprenoid biosynthesis; dimethylallyl diphosphate biosynthesis; dimethylallyl diphosphate from (2E)-4-hydroxy-3-methylbutenyl diphosphate: step 1/1. The protein operates within isoprenoid biosynthesis; isopentenyl diphosphate biosynthesis via DXP pathway; isopentenyl diphosphate from 1-deoxy-D-xylulose 5-phosphate: step 6/6. Its function is as follows. Catalyzes the conversion of 1-hydroxy-2-methyl-2-(E)-butenyl 4-diphosphate (HMBPP) into a mixture of isopentenyl diphosphate (IPP) and dimethylallyl diphosphate (DMAPP). Acts in the terminal step of the DOXP/MEP pathway for isoprenoid precursor biosynthesis. This chain is 4-hydroxy-3-methylbut-2-enyl diphosphate reductase, found in Yersinia pseudotuberculosis serotype IB (strain PB1/+).